We begin with the raw amino-acid sequence, 208 residues long: Probable splicing factor, arginine/serine-rich 5 (208 aa).

Residues 2-74 (PRLYLGKIPY…MRLVVEMARG (73 aa)) form the RRM domain. Positions 71–208 (MARGKPRGND…RSPSPGSPKD (138 aa)) are disordered. Basic residues predominate over residues 84–123 (SRSPRRRSRSPRRRSRTPPRRRSRSRDRKRSRRSRSRSSS). Over residues 128–153 (PVRESRRRSESRSPSPKRDLKREASR) the composition is skewed to basic and acidic residues.

This sequence belongs to the splicing factor SR family. Post-translationally, extensively phosphorylated on serine residues in the RS domain.

It is found in the nucleus. Functionally, plays a functionally redundant role in shifting germ cell sexual differentiation in hermaphrodites. In Caenorhabditis elegans, this protein is Probable splicing factor, arginine/serine-rich 5 (rsp-5).